The primary structure comprises 301 residues: Rhodopsin (301 aa).

Residues 1 to 18 (LHMIHLHWYQYPPMNPMM) lie on the Extracellular side of the membrane. The helical transmembrane segment at 19 to 43 (YPLLLIFMFITGIPCLAGNFVTIWV) threads the bilayer. At 44-55 (FMTTKSLRSPAN) the chain is on the cytoplasmic side. A helical membrane pass occupies residues 56 to 78 (LLVVNLAMSDFLMMFTMFPPMMI). Residues 79–92 (TCYYHTWTLGPTFC) lie on the Extracellular side of the membrane. Cysteine 92 and cysteine 169 are joined by a disulfide. Residues 93–115 (QVYAFLGNLFGCTSIWTMVFITF) form a helical membrane-spanning segment. A 'Ionic lock' involved in activated form stabilization motif is present at residues 116–118 (DRY). At 116 to 134 (DRYNVIVKGVAGEPLSNKK) the chain is on the cytoplasmic side. A helical membrane pass occupies residues 135 to 155 (AALWILSAWVLSFSWCSAPFF). The Extracellular portion of the chain corresponds to 156–182 (GWNRYVPEGNLTGCGTDYLSEDALSRS). Asparagine 165 carries an N-linked (GlcNAc...) asparagine glycan. The chain crosses the membrane as a helical span at residues 183–204 (YLYVYSVWVYFLPLLITIYCYV). Topologically, residues 205–245 (FIIKAVAAHEKGMRDQAKKMGIKSLRNEEAQKTSAECRLAK) are cytoplasmic. The helical transmembrane segment at 246–267 (IAMTTVALWFIAWTPYLLINWV) threads the bilayer. Residues 268–278 (GMFARSYLSPV) lie on the Extracellular side of the membrane. A helical transmembrane segment spans residues 279–300 (YTIWGYVFAKANAVYNPIVYAI). Lysine 288 is modified (N6-(retinylidene)lysine).

The protein belongs to the G-protein coupled receptor 1 family. Opsin subfamily. As to quaternary structure, homodimer. Interacts with GNAQ. Post-translationally, contains one covalently linked retinal chromophore.

It localises to the cell projection. The protein resides in the rhabdomere membrane. In terms of biological role, photoreceptor required for image-forming vision at low light intensity. Can use both retinal and 3-dehydroretinal as visual pigment. Light-induced isomerization of 11-cis to all-trans retinal triggers a conformational change that activates signaling via G-proteins. Signaling via GNAQ probably mediates the activation of phospholipase C. The protein is Rhodopsin (RHO) of Cambarellus shufeldtii (Cajun dwarf crayfish).